Reading from the N-terminus, the 194-residue chain is Protein GrpE (194 aa).

It belongs to the GrpE family. Homodimer.

Its subcellular location is the cytoplasm. Participates actively in the response to hyperosmotic and heat shock by preventing the aggregation of stress-denatured proteins, in association with DnaK and GrpE. It is the nucleotide exchange factor for DnaK and may function as a thermosensor. Unfolded proteins bind initially to DnaJ; upon interaction with the DnaJ-bound protein, DnaK hydrolyzes its bound ATP, resulting in the formation of a stable complex. GrpE releases ADP from DnaK; ATP binding to DnaK triggers the release of the substrate protein, thus completing the reaction cycle. Several rounds of ATP-dependent interactions between DnaJ, DnaK and GrpE are required for fully efficient folding. The sequence is that of Protein GrpE from Aliivibrio fischeri (strain ATCC 700601 / ES114) (Vibrio fischeri).